Consider the following 526-residue polypeptide: Fusicoccadiene 8-ol C-16-hydroxylase (526 aa).

Residues 34–56 (AFVGFSVLGLTLLFSKLFYNAYL) form a helical membrane-spanning segment. N-linked (GlcNAc...) asparagine glycans are attached at residues asparagine 309, asparagine 418, and asparagine 434. Cysteine 470 lines the heme pocket.

This sequence belongs to the cytochrome P450 family. It depends on heme as a cofactor.

The protein resides in the membrane. The protein operates within mycotoxin biosynthesis. Functionally, cytochrome P450 monooxygenase; part of the 2 gene clusters that mediate the biosynthesis of fusicoccins, diterpene glucosides that display phytohormone-like activity and function as potent activators of plasma membrane H(+)-ATPases in plants by modifying 14-3-3 proteins and cause the plant disease constriction canker. The first step in the pathway is performed by the fusicoccadiene synthase PaFS that possesses both prenyl transferase and terpene cyclase activity, converting isopentenyl diphosphate and dimethylallyl diphosphate into geranylgeranyl diphosphate (GGDP) and successively converting GGDP into fusicocca-2,10(14)-diene, a precursor for fusicoccin H. The second step is the oxidation at the C-8 position by the cytochrome P450 monooxygenase PaP450-2 to yield fusicocca-2,10(14)-diene-8-beta-ol. The cytochrome P450 monooxygenase PaP450-1 then catalyzes the hydroxylation at the C-16 position to produce fusicocca-2,10(14)-diene-8-beta,16-diol. The dioxygenase fc-dox then catalyzes the 16-oxydation of fusicocca-2,10(14)-diene-8-beta,16-diol to yield an aldehyde (8-beta-hydroxyfusicocca-1,10(14)-dien-16-al). The short-chain dehydrogenase/reductase fc-sdr catalyzes the reduction of the aldehyde to yield fusicocca-1,10(14)-diene-8-beta,16-diol. The next step is the hydroxylation at C-9 performed by the cytochrome P450 monooxygenase PaP450-3 that leads to fusicoccin H aglycon which is glycosylated to fusicoccin H by the O-glycosyltransferase PaGT. Hydroxylation at C-12 by the cytochrome P450 monooxygenase PaP450-4 leads then to the production of fusicoccin Q and is followed by methylation by the O-methyltransferase PaMT to yield fusicoccin P. Fusicoccin P is further converted to fusicoccin J via prenylation by the O-glucose prenyltransferase PaPT. Cytochrome P450 monooxygenase PaP450-5 then performs hydroxylation at C-19 to yield dideacetyl-fusicoccin A which is acetylated to 3'-O-deacetyl-fusicoccin A by the O-acetyltransferase PaAT-2. Finally, a another acetylation by the O-acetyltransferase PaAT-1 yields fusicoccin A. This Phomopsis amygdali (Fusicoccum amygdali) protein is Fusicoccadiene 8-ol C-16-hydroxylase.